Consider the following 248-residue polypeptide: Methionine aminopeptidase (248 aa).

H77 contacts substrate. Residues D94, D105, and H169 each coordinate a divalent metal cation. H176 contacts substrate. A divalent metal cation contacts are provided by E202 and E233.

The protein belongs to the peptidase M24A family. Methionine aminopeptidase type 1 subfamily. As to quaternary structure, monomer. Requires Co(2+) as cofactor. It depends on Zn(2+) as a cofactor. Mn(2+) serves as cofactor. Fe(2+) is required as a cofactor.

The catalysed reaction is Release of N-terminal amino acids, preferentially methionine, from peptides and arylamides.. Its function is as follows. Removes the N-terminal methionine from nascent proteins. The N-terminal methionine is often cleaved when the second residue in the primary sequence is small and uncharged (Met-Ala-, Cys, Gly, Pro, Ser, Thr, or Val). Requires deformylation of the N(alpha)-formylated initiator methionine before it can be hydrolyzed. The sequence is that of Methionine aminopeptidase from Mycoplasma genitalium (strain ATCC 33530 / DSM 19775 / NCTC 10195 / G37) (Mycoplasmoides genitalium).